A 322-amino-acid polypeptide reads, in one-letter code: tRNA U34 carboxymethyltransferase (322 aa).

Residues Lys-91, Trp-105, Lys-110, Gly-129, 179–180 (LE), Met-195, Tyr-199, and Arg-314 contribute to the carboxy-S-adenosyl-L-methionine site.

The protein belongs to the class I-like SAM-binding methyltransferase superfamily. CmoB family. Homotetramer.

It catalyses the reaction carboxy-S-adenosyl-L-methionine + 5-hydroxyuridine(34) in tRNA = 5-carboxymethoxyuridine(34) in tRNA + S-adenosyl-L-homocysteine + H(+). Functionally, catalyzes carboxymethyl transfer from carboxy-S-adenosyl-L-methionine (Cx-SAM) to 5-hydroxyuridine (ho5U) to form 5-carboxymethoxyuridine (cmo5U) at position 34 in tRNAs. The polypeptide is tRNA U34 carboxymethyltransferase (Pseudomonas aeruginosa (strain LESB58)).